Here is a 300-residue protein sequence, read N- to C-terminus: Transcriptional dual regulator GltC (300 aa).

The 58-residue stretch at 1 to 58 folds into the HTH lysR-type domain; the sequence is MELRQLRYFMEVAEREHVSEAADHLHVAQSAISRQIANLEEELNVTLFEREGRNIKLT. Residues 18–37 constitute a DNA-binding region (H-T-H motif); that stretch reads VSEAADHLHVAQSAISRQIA.

Belongs to the LysR transcriptional regulatory family. As to quaternary structure, interacts with gutamate dehydrogenase RocG.

Its activity is regulated as follows. Activated by alpha-ketoglutarate and inhibited by glutamate and by RocG. Its function is as follows. Positive regulator of glutamate biosynthesis (gltAB genes). Negatively regulates its own expression. This chain is Transcriptional dual regulator GltC (gltC), found in Bacillus subtilis (strain 168).